We begin with the raw amino-acid sequence, 345 residues long: Biotin synthase (345 aa).

The Radical SAM core domain occupies 38-256 (RQVQVSTLLS…IAVARIMMPA (219 aa)). [4Fe-4S] cluster contacts are provided by cysteine 53, cysteine 57, and cysteine 60. [2Fe-2S] cluster is bound by residues cysteine 97, cysteine 128, cysteine 188, and arginine 260.

Belongs to the radical SAM superfamily. Biotin synthase family. Homodimer. The cofactor is [4Fe-4S] cluster. [2Fe-2S] cluster is required as a cofactor.

It catalyses the reaction (4R,5S)-dethiobiotin + (sulfur carrier)-SH + 2 reduced [2Fe-2S]-[ferredoxin] + 2 S-adenosyl-L-methionine = (sulfur carrier)-H + biotin + 2 5'-deoxyadenosine + 2 L-methionine + 2 oxidized [2Fe-2S]-[ferredoxin]. Its pathway is cofactor biosynthesis; biotin biosynthesis; biotin from 7,8-diaminononanoate: step 2/2. In terms of biological role, catalyzes the conversion of dethiobiotin (DTB) to biotin by the insertion of a sulfur atom into dethiobiotin via a radical-based mechanism. In Serratia proteamaculans (strain 568), this protein is Biotin synthase.